Reading from the N-terminus, the 72-residue chain is Large ribosomal subunit protein uL29 (72 aa).

Belongs to the universal ribosomal protein uL29 family.

The polypeptide is Large ribosomal subunit protein uL29 (Prochlorococcus marinus (strain MIT 9301)).